Consider the following 344-residue polypeptide: tRNA N6-adenosine threonylcarbamoyltransferase (344 aa).

2 residues coordinate Fe cation: H114 and H118. Substrate is bound by residues 136 to 140 (LVSGG), D170, G183, D187, and N278. D306 contacts Fe cation.

The protein belongs to the KAE1 / TsaD family. Requires Fe(2+) as cofactor.

The protein localises to the cytoplasm. The catalysed reaction is L-threonylcarbamoyladenylate + adenosine(37) in tRNA = N(6)-L-threonylcarbamoyladenosine(37) in tRNA + AMP + H(+). In terms of biological role, required for the formation of a threonylcarbamoyl group on adenosine at position 37 (t(6)A37) in tRNAs that read codons beginning with adenine. Is involved in the transfer of the threonylcarbamoyl moiety of threonylcarbamoyl-AMP (TC-AMP) to the N6 group of A37, together with TsaE and TsaB. TsaD likely plays a direct catalytic role in this reaction. The sequence is that of tRNA N6-adenosine threonylcarbamoyltransferase from Mycobacteroides abscessus (strain ATCC 19977 / DSM 44196 / CCUG 20993 / CIP 104536 / JCM 13569 / NCTC 13031 / TMC 1543 / L948) (Mycobacterium abscessus).